The following is a 534-amino-acid chain: Pentatricopeptide repeat-containing protein At1g07590, mitochondrial (534 aa).

A mitochondrion-targeting transit peptide spans Met1–Arg20. PPR repeat units lie at residues Asn165–Thr199, Ser200–Pro234, His235–Pro269, Asn270–Ser300, Asn305–Phe335, Arg339–Val369, Glu374–Pro408, Asn409–Lys443, and Trp451–Arg485.

The protein belongs to the PPR family. P subfamily.

The protein localises to the mitochondrion. This is Pentatricopeptide repeat-containing protein At1g07590, mitochondrial from Arabidopsis thaliana (Mouse-ear cress).